The sequence spans 636 residues: 1-deoxy-D-xylulose-5-phosphate synthase (636 aa).

Thiamine diphosphate is bound by residues His75 and 116–118; that span reads AHS. Asp147 is a Mg(2+) binding site. Residues 148–149, Asn177, Tyr288, and Glu370 each bind thiamine diphosphate; that span reads GA. Mg(2+) is bound at residue Asn177.

It belongs to the transketolase family. DXPS subfamily. As to quaternary structure, homodimer. The cofactor is Mg(2+). It depends on thiamine diphosphate as a cofactor.

The enzyme catalyses D-glyceraldehyde 3-phosphate + pyruvate + H(+) = 1-deoxy-D-xylulose 5-phosphate + CO2. Its pathway is metabolic intermediate biosynthesis; 1-deoxy-D-xylulose 5-phosphate biosynthesis; 1-deoxy-D-xylulose 5-phosphate from D-glyceraldehyde 3-phosphate and pyruvate: step 1/1. Catalyzes the acyloin condensation reaction between C atoms 2 and 3 of pyruvate and glyceraldehyde 3-phosphate to yield 1-deoxy-D-xylulose-5-phosphate (DXP). This Ralstonia nicotianae (strain ATCC BAA-1114 / GMI1000) (Ralstonia solanacearum) protein is 1-deoxy-D-xylulose-5-phosphate synthase.